We begin with the raw amino-acid sequence, 427 residues long: Chaperone SurA (427 aa).

A signal peptide spans 1-19 (MKIWKSILFTTLLSCGAVA). 2 consecutive PpiC domains span residues 170–268 (TVQY…KIED) and 277–377 (VTEV…EVLD).

It localises to the periplasm. It catalyses the reaction [protein]-peptidylproline (omega=180) = [protein]-peptidylproline (omega=0). In terms of biological role, chaperone involved in the correct folding and assembly of outer membrane proteins. Recognizes specific patterns of aromatic residues and the orientation of their side chains, which are found more frequently in integral outer membrane proteins. May act in both early periplasmic and late outer membrane-associated steps of protein maturation. This is Chaperone SurA from Vibrio parahaemolyticus serotype O3:K6 (strain RIMD 2210633).